Consider the following 708-residue polypeptide: Transcriptional regulator nsrM (708 aa).

Positions 37-63 (CVRCQQRKVRCDHKSPCGNCVASDSQC) form a DNA-binding region, zn(2)-C6 fungal-type.

It localises to the nucleus. Transcriptional regulator; part of the gene cluster that mediates the biosynthesis of the tetrahydroxanthone dimer neosartorin, which exhibits antibacterial activity. This is Transcriptional regulator nsrM from Aspergillus novofumigatus (strain IBT 16806).